Consider the following 111-residue polypeptide: Cell division protein FtsB (111 aa).

Topologically, residues 1–3 (MRL) are cytoplasmic. Residues 4 to 21 (ITLFLLLLLLAIQYPLWL) traverse the membrane as a helical segment. The Periplasmic portion of the chain corresponds to 22-111 (GKGGWLRVWD…PPPAGQQAHH (90 aa)). The stretch at 31–64 (DMQKQVTAQNQRNAELKQRNTKLEGEVKDLKEGT) forms a coiled coil. The segment at 89 to 111 (APAPKTSETPLPPPPPAGQQAHH) is disordered.

The protein belongs to the FtsB family. Part of a complex composed of FtsB, FtsL and FtsQ.

The protein resides in the cell inner membrane. Essential cell division protein. May link together the upstream cell division proteins, which are predominantly cytoplasmic, with the downstream cell division proteins, which are predominantly periplasmic. This chain is Cell division protein FtsB, found in Ralstonia pickettii (strain 12J).